A 318-amino-acid chain; its full sequence is MDEDEKKDMCPICKTDRYLSPDMKFLINPECYHKICESCVDRIFSLGPAQCPYEGCDKILRRNKFKTQIFDDVGVEKEVDIRKRVFNVFNKTLEDFDNNQDDYDKYLEEVEDIIYNLDHGIDMEKTEERLRTYEELNKQLIMANLERSKQDVANFEQRQKFEKEMKLKKRLLEKQIEEEERANREWAKREIVNQLTVNEDAEEVIENVKKTVKLKKSSARRKLEELNKVLRNNPYMTMTNGRMKKKDTVPFTPFNGDRDLHKRYELVENEYNDSFIRDLQKKKEYIASGFRADFIYDRMLTEAFMGLGCIISEELQSS.

The RING-type zinc finger occupies 10–55 (CPICKTDRYLSPDMKFLINPECYHKICESCVDRIFSLGPAQCPYEG).

It localises to the nucleus. Functionally, acts as a component of the general transcription and DNA repair factor IIH (TFIIH or factor B), which is essential for both basal and activated transcription, and is involved in nucleotide excision repair (NER) of damaged DNA. TFIIH as CTD kinase activity and DNA-dependent ATPase activity, and is essential for polymerase II transcription. The sequence is that of RNA polymerase II transcription factor B subunit 3 (TFB3) from Kluyveromyces lactis (strain ATCC 8585 / CBS 2359 / DSM 70799 / NBRC 1267 / NRRL Y-1140 / WM37) (Yeast).